Here is a 280-residue protein sequence, read N- to C-terminus: Virginiamycin B lyase (280 aa).

His-215 contributes to the substrate binding site. Glu-254 serves as a coordination point for Mg(2+). His-256 acts as the Proton acceptor in catalysis. Glu-271 provides a ligand contact to Mg(2+).

Belongs to the Vgb family. As to quaternary structure, monomer. It depends on Mg(2+) as a cofactor.

Its function is as follows. Inactivates the type B streptogramin antibiotics by linearizing the lactone ring at the ester linkage, generating a free phenylglycine carboxylate and converting the threonyl moiety into 2-amino-butenoic acid. The chain is Virginiamycin B lyase from Mycobacterium sp. (strain JLS).